The following is a 491-amino-acid chain: Probable cytosol aminopeptidase (491 aa).

Positions 264 and 269 each coordinate Mn(2+). Residue Lys-276 is part of the active site. Mn(2+) contacts are provided by Asp-287, Asp-346, and Glu-348. Arg-350 is an active-site residue.

Belongs to the peptidase M17 family. Requires Mn(2+) as cofactor.

The protein localises to the cytoplasm. The enzyme catalyses Release of an N-terminal amino acid, Xaa-|-Yaa-, in which Xaa is preferably Leu, but may be other amino acids including Pro although not Arg or Lys, and Yaa may be Pro. Amino acid amides and methyl esters are also readily hydrolyzed, but rates on arylamides are exceedingly low.. It catalyses the reaction Release of an N-terminal amino acid, preferentially leucine, but not glutamic or aspartic acids.. Presumably involved in the processing and regular turnover of intracellular proteins. Catalyzes the removal of unsubstituted N-terminal amino acids from various peptides. This chain is Probable cytosol aminopeptidase, found in Xylella fastidiosa (strain Temecula1 / ATCC 700964).